We begin with the raw amino-acid sequence, 483 residues long: Myocilin (483 aa).

A signal peptide spans 1 to 18; that stretch reads MPTAQLLLLACLLWGLEA. N43 is a glycosylation site (N-linked (GlcNAc...) asparagine). A coiled-coil region spans residues 51–162; the sequence is GQAMSAIQDL…SQEVARLRRG (112 aa). Residues 153 to 179 form a disordered region; the sequence is SQEVARLRRGQCPQAHSSSQDVPAGSR. One can recognise an Olfactomedin-like domain in the interval 223–482; sequence GCGELVWVGE…MVTYDIRLSK (260 aa). The cysteines at positions 224 and 412 are disulfide-linked. Residues D359, N407, A408, I456, and D457 each coordinate Ca(2+). The Microbody targeting signal motif lies at 481-483; the sequence is SKM.

As to quaternary structure, homodimer (via N-terminus). Can also form higher oligomers. Interacts with OLFM3, FN1, NRCAM, GLDN and NFASC. Interacts (via N-terminus) with MYL2. Interacts with SFRP1, FRZB, FZD7, FZD10, FZD1 and WIF1; regulates Wnt signaling. Interacts with SNTA1; regulates muscle hypertrophy. Interacts with ERBB2 and ERBB3; activates ERBB2-ERBB3 signaling pathway. Interacts with SNCG; affects its secretion and its aggregation. N-glycosylated. In terms of processing, palmitoylated. Post-translationally, undergoes a calcium-dependent proteolytic cleavage at Arg-205 by CAPN2 in the endoplasmic reticulum. The result is the production of two fragments, one of 35 kDa containing the C-terminal olfactomedin-like domain, and another of 20 kDa containing the N-terminal leucine zipper-like domain. In terms of tissue distribution, expressed in optic nerve head, ciliary body and retina.

The protein resides in the secreted. Its subcellular location is the golgi apparatus. The protein localises to the cytoplasmic vesicle. It localises to the extracellular space. It is found in the extracellular matrix. The protein resides in the extracellular exosome. Its subcellular location is the mitochondrion. The protein localises to the mitochondrion intermembrane space. It localises to the mitochondrion inner membrane. It is found in the mitochondrion outer membrane. The protein resides in the rough endoplasmic reticulum. Its subcellular location is the cell projection. The protein localises to the cilium. It localises to the endoplasmic reticulum. Its function is as follows. Secreted glycoprotein regulating the activation of different signaling pathways in adjacent cells to control different processes including cell adhesion, cell-matrix adhesion, cytoskeleton organization and cell migration. Promotes substrate adhesion, spreading and formation of focal contacts. Negatively regulates cell-matrix adhesion and stress fiber assembly through Rho protein signal transduction. Modulates the organization of actin cytoskeleton by stimulating the formation of stress fibers through interactions with components of Wnt signaling pathways. Promotes cell migration through activation of PTK2 and the downstream phosphatidylinositol 3-kinase signaling. Plays a role in bone formation and promotes osteoblast differentiation in a dose-dependent manner through mitogen-activated protein kinase signaling. Mediates myelination in the peripheral nervous system through ERBB2/ERBB3 signaling. Plays a role as a regulator of muscle hypertrophy through the components of dystrophin-associated protein complex. Involved in positive regulation of mitochondrial depolarization. Plays a role in neurite outgrowth. May participate in the obstruction of fluid outflow in the trabecular meshwork. The protein is Myocilin (MYOC) of Canis lupus familiaris (Dog).